The following is a 62-amino-acid chain: Large ribosomal subunit protein bL28 (62 aa).

Positions 1 to 27 (MARECYITGRKARSGNKRSHAMNKSKR) are disordered. Positions 10–27 (RKARSGNKRSHAMNKSKR) are enriched in basic residues.

It belongs to the bacterial ribosomal protein bL28 family.

The chain is Large ribosomal subunit protein bL28 from Shouchella clausii (strain KSM-K16) (Alkalihalobacillus clausii).